The following is a 305-amino-acid chain: Dihydroorotate dehydrogenase B (NAD(+)), catalytic subunit (305 aa).

Residues Ser-23 and 47–48 each bind FMN; that span reads KG. Residues Lys-47 and 71-75 each bind substrate; that span reads NAIGL. Asn-101 and Asn-129 together coordinate FMN. Position 129 (Asn-129) interacts with substrate. Cys-132 acts as the Nucleophile in catalysis. Positions 167 and 193 each coordinate FMN. Residue 194–195 participates in substrate binding; sequence NT. FMN is bound by residues Gly-219, 245–246, and 267–268; these read GG and GT.

The protein belongs to the dihydroorotate dehydrogenase family. Type 1 subfamily. As to quaternary structure, heterotetramer of 2 PyrK and 2 PyrD type B subunits. FMN serves as cofactor.

It is found in the cytoplasm. It carries out the reaction (S)-dihydroorotate + NAD(+) = orotate + NADH + H(+). It participates in pyrimidine metabolism; UMP biosynthesis via de novo pathway; orotate from (S)-dihydroorotate (NAD(+) route): step 1/1. Functionally, catalyzes the conversion of dihydroorotate to orotate with NAD(+) as electron acceptor. The sequence is that of Dihydroorotate dehydrogenase B (NAD(+)), catalytic subunit (pyrD) from Geobacter sulfurreducens (strain ATCC 51573 / DSM 12127 / PCA).